A 434-amino-acid chain; its full sequence is Glutamyl-tRNA reductase (434 aa).

Residues 49–52 (TCNR), S107, 112–114 (EPQ), and Q118 each bind substrate. C50 functions as the Nucleophile in the catalytic mechanism. 187–192 (GAGETV) contributes to the NADP(+) binding site.

It belongs to the glutamyl-tRNA reductase family. In terms of assembly, homodimer.

The catalysed reaction is (S)-4-amino-5-oxopentanoate + tRNA(Glu) + NADP(+) = L-glutamyl-tRNA(Glu) + NADPH + H(+). Its pathway is porphyrin-containing compound metabolism; protoporphyrin-IX biosynthesis; 5-aminolevulinate from L-glutamyl-tRNA(Glu): step 1/2. Functionally, catalyzes the NADPH-dependent reduction of glutamyl-tRNA(Glu) to glutamate 1-semialdehyde (GSA). The polypeptide is Glutamyl-tRNA reductase (Hydrogenovibrio crunogenus (strain DSM 25203 / XCL-2) (Thiomicrospira crunogena)).